The sequence spans 329 residues: Probable nicotianamine synthase 4 (329 aa).

It belongs to the nicotianamine synthase (NAS)-like family.

It carries out the reaction 3 S-adenosyl-L-methionine = nicotianamine + 3 S-methyl-5'-thioadenosine + 3 H(+). Functionally, synthesizes nicotianamine, a polyamine that is the first intermediate in the synthesis of the phytosiderophores of the mugineic acid type found in gramineae which serves as a sensor for the physiological iron status within the plant, and/or might be involved in the transport of iron. The polypeptide is Probable nicotianamine synthase 4 (NAS4) (Hordeum vulgare (Barley)).